A 751-amino-acid chain; its full sequence is Adhesive plaque matrix protein (751 aa).

The signal sequence occupies residues 1–20 (MEGIKLNLCLLCIFTCDILG). The segment at 21 to 41 (FSNGNIYNAHGSAYAGASAGA) is nonrepetitive linker. Repeat copies occupy residues 109 to 118 (YKPKMTYPPT), 119 to 128 (YKPKPSYPPT), 129 to 138 (YKPKPSYPAT), 139 to 148 (YKSKSSYPSS), 149 to 158 (YKPKKTYPPT), 159 to 168 (YKPKLTYPPT), 169 to 178 (YKPKPSYPPT), 179 to 188 (YKPKPSYPAT), 189 to 198 (YKSKSSYPPS), 199 to 208 (YKTKKTYPSS), 209 to 218 (YKPKKTYPST), 219 to 228 (YKPKVSYPPT), 229 to 238 (YKSKKSYPPI), 239 to 248 (YKTKASYPSS), 249 to 258 (YKPKKTYPST), 259 to 268 (YKPKISYPPT), 269 to 278 (YKAKPSYPTS), 279 to 288 (YRAKPSYPST), 289 to 298 (YKAKPSYPPT), 299 to 308 (YKAKPSYPPT), 309 to 318 (YKAKPTYPST), 319 to 328 (YKAKPSYPPT), 329 to 338 (YKAKPSYPPT), 339 to 348 (YKAKPSYPPS), 349 to 358 (YKPKTTYPPS), 359 to 368 (YKPKISYPPT), 369 to 378 (YKAKPSYPPI), 379 to 388 (YKAKPSYPPT), 389 to 398 (YKAKPSYLPT), 399 to 408 (YKAKPSYPPT), 409 to 418 (YKAKPRYPTT), 419 to 428 (YKAKPSYPPT), 429 to 438 (YKAKPSYPPT), 439 to 448 (YKAKLSYPPT), 449 to 458 (YKAKPSYPPT), 459 to 468 (YKAKPSYPPT), 469 to 478 (YKAKPSYPPT), 479 to 488 (YKTKPSYPRT), 489 to 498 (YKAKPSYSST), 499 to 508 (YKAKPSYPPT), 509 to 518 (YKAKPSYPPT), 519 to 528 (YKAKPSYPPT), 529 to 538 (YKAKPSYPPT), 539 to 548 (YKAKPSYPPT), 549 to 558 (YKAKPSYPQT), 559 to 568 (YKAKSSYPPT), 569 to 578 (YKAKPSYPPT), 579 to 588 (YKAKPSYPPT), 589 to 598 (YKAKPSYPPT), 599 to 608 (YKAKPSYPPT), 609 to 618 (YKAKPSYPPT), 619 to 628 (YKAKPSYPPT), 629 to 638 (YKAKPSYPPT), 639 to 648 (YKAKPSYPPT), and 649 to 658 (YKAKPSYPAT). The tract at residues 109-732 (YKPKMTYPPT…YKPKPSYPPT (624 aa)) is 63 X 10 AA tandem repeats of Y-[KR]-[APTS]-K-[KPMSLTIVA]-[STR]-Y-[PLS]-[PASRQT]-[STI]. A compositionally biased stretch (low complexity) spans 158-167 (TYKPKLTYPP). The interval 158–359 (TYKPKLTYPP…KPKTTYPPSY (202 aa)) is disordered. A compositionally biased stretch (pro residues) spans 168 to 184 (TYKPKPSYPPTYKPKPS). Low complexity predominate over residues 185–262 (YPATYKSKSS…KTYPSTYKPK (78 aa)). Composition is skewed to low complexity over residues 288-343 (TYKA…KAKP) and 350-359 (KPKTTYPPSY). Positions 397–636 (PTYKAKPSYP…PTYKAKPSYP (240 aa)) are disordered. Low complexity predominate over residues 444 to 486 (SYPPTYKAKPSYPPTYKAKPSYPPTYKAKPSYPPTYKTKPSYP). A 56; truncated repeat occupies 659 to 662 (YPST). Residues 660 to 751 (PSTYKAKPSY…KKKISYPSQY (92 aa)) form a disordered region. Residues 662-677 (TYKAKPSYPPTYKAKP) are compositionally biased toward low complexity. 7 repeat units span residues 663–672 (YKAKPSYPPT), 673–682 (YKAKPSYPPT), 683–692 (YKPKPSYPPT), 693–702 (YKSKSSYPSS), 703–712 (YKPKKTYPPT), 713–722 (YKPKLTYPPI), and 723–732 (YKPKPSYPPT). Residues 678–690 (SYPPTYKPKPSYP) show a composition bias toward pro residues. Over residues 691-721 (PTYKSKSSYPSSYKPKKTYPPTYKPKLTYPP) the composition is skewed to low complexity.

In terms of processing, hydroxylated on proline (mono- or dihydroxylation) and tyrosine residues (to L-DOPA = 3',4'-dihydroxyphenylalanine) of the tandem repeats. As to expression, produced by the byssal gland.

It is found in the secreted. Its function is as follows. Provides adhesiveness to the mussel's foot. Mussels produce one of the strongest water insoluble glues. The mussel's adhesive is a bundle of threads, called a byssus, formed by a fibrous collagenous core coated with adhesive proteins. The chain is Adhesive plaque matrix protein (FP1) from Mytilus galloprovincialis (Mediterranean mussel).